The sequence spans 354 residues: MAELKNDRYLRALLKQPVDMTPVWMMRQAGRYLPEYKATRAQAGDFMSLCKNHELACEVTLQPLRRYELDAAILFSDILTVPDAMGLGLYFEAGEGPRFERPTDTIDAIKKLAVPDPEDDLGYVMKAVSTIRRELNGQVPLIGFSGSPWTLATYMVEGGSSKTFEKIKKMAYAEPAALHMLLDKLADSVTLYLNAQVANGAQSLMIFDSWGGALSHTAYREFSLRYMQKIVDGLTRFADGRQVPVTLFTKGGGLWLEAMAETGCDALGLDWTVDIADARRRVGHKVALQGNMDPSMLYAPIPRIEEEVAQILAGYGEGTGHVFNLGHGIHQHVDPEHAGAFIKAVHAQSKQYHK.

Substrate-binding positions include 27–31 (RQAGR), Asp77, Tyr154, Ser209, and His327.

The protein belongs to the uroporphyrinogen decarboxylase family. Homodimer.

The protein resides in the cytoplasm. The catalysed reaction is uroporphyrinogen III + 4 H(+) = coproporphyrinogen III + 4 CO2. It participates in porphyrin-containing compound metabolism; protoporphyrin-IX biosynthesis; coproporphyrinogen-III from 5-aminolevulinate: step 4/4. Its function is as follows. Catalyzes the decarboxylation of four acetate groups of uroporphyrinogen-III to yield coproporphyrinogen-III. This Shewanella sp. (strain ANA-3) protein is Uroporphyrinogen decarboxylase.